Consider the following 262-residue polypeptide: Thiazole synthase (262 aa).

K96 serves as the catalytic Schiff-base intermediate with DXP. Residues G157, 184-185 (AG), and 206-207 (NT) each bind 1-deoxy-D-xylulose 5-phosphate.

This sequence belongs to the ThiG family. In terms of assembly, homotetramer. Forms heterodimers with either ThiH or ThiS.

It localises to the cytoplasm. The enzyme catalyses [ThiS sulfur-carrier protein]-C-terminal-Gly-aminoethanethioate + 2-iminoacetate + 1-deoxy-D-xylulose 5-phosphate = [ThiS sulfur-carrier protein]-C-terminal Gly-Gly + 2-[(2R,5Z)-2-carboxy-4-methylthiazol-5(2H)-ylidene]ethyl phosphate + 2 H2O + H(+). The protein operates within cofactor biosynthesis; thiamine diphosphate biosynthesis. Catalyzes the rearrangement of 1-deoxy-D-xylulose 5-phosphate (DXP) to produce the thiazole phosphate moiety of thiamine. Sulfur is provided by the thiocarboxylate moiety of the carrier protein ThiS. In vitro, sulfur can be provided by H(2)S. This Legionella pneumophila (strain Paris) protein is Thiazole synthase.